The sequence spans 433 residues: uncharacterized protein (433 aa).

A Radical SAM core domain is found at 104-349; sequence ERGRNIIQVR…ELEYKKKGIE (246 aa). The [4Fe-4S] cluster site is built by Cys118, Cys122, and Cys125. S-adenosyl-L-methionine contacts are provided by residues 171 to 172 and 236 to 238; these read GE and MLS. Residues 370–433 enclose the TRAM domain; that stretch reads PFKVGEVTKV…KDNIIVAELV (64 aa).

Belongs to the radical SAM superfamily. The cofactor is [4Fe-4S] cluster.

This is an uncharacterized protein from Methanocaldococcus jannaschii (strain ATCC 43067 / DSM 2661 / JAL-1 / JCM 10045 / NBRC 100440) (Methanococcus jannaschii).